The sequence spans 89 residues: UPF0367 protein CYA_1023 (89 aa).

Residues 69-89 (TKSGGPGAPGTRPGFLAQLQG) are disordered.

Belongs to the UPF0367 family.

This Synechococcus sp. (strain JA-3-3Ab) (Cyanobacteria bacterium Yellowstone A-Prime) protein is UPF0367 protein CYA_1023.